Reading from the N-terminus, the 484-residue chain is MSLSIVSYYGSQQSKCGYCAGANCSLSHGMHAYQLDCRDYQDLIDRGWRRCGYYCYKLRNQETCCPCYTIKCNGLEFKLSKSNKRILRRINRFLRDGKRESKPEAGDGDGEADADYAIVAPEVTASEPQPQLPDKSPPVINVEQVASLATAQRKPTKQATAAAVEAPTLGSNKSSLLSSSAAAPISNKPCKKAKQMRLDRRLAKLGDSASYSTKSLTQEKTLRDFLNTDSETNKHRLKLRLIHVYDDEFRRTLPQSFALYKKYQISIHNDPPKDQDAYKEHLQATPLQNEKPWDGPEMGYGSFHQQYWLDDKLIAVGVIDILPGCVSSVYFFYDPDYSFLSLGTYGSLREIELVQSLAEKVPSLKYYYMGFYIHSCPKMRYKGKLSPSYLLCPETYEWLPLTDVIRAKLDEHKYQRLNEDPAARDVNEFLMEHLDEVKLLLGGRTRTDYKHFRQLRGTVSDDDIIIEYSKLVGKECARRMLYVK.

Belongs to the R-transferase family.

It catalyses the reaction an N-terminal L-alpha-aminoacyl-[protein] + L-arginyl-tRNA(Arg) = an N-terminal L-arginyl-L-aminoacyl-[protein] + tRNA(Arg) + H(+). Functionally, involved in the post-translational conjugation of arginine to the N-terminal aspartate or glutamate of a protein. This arginylation is required for degradation of the protein via the ubiquitin pathway. Does not arginylate cysteine residues. This is Arginyl-tRNA--protein transferase 1 (Ate1) from Drosophila melanogaster (Fruit fly).